A 497-amino-acid polypeptide reads, in one-letter code: MSGSTRTGSASVLLVGLSFRSAPVTMLEQATVADADLPKMQLSLVDNDVISESLVLSTCNRMEFYTVANAFHSGLDHVVDTIAQFSGLQTAELEPHLYVHYADSAAEHMLKVASGLDSMVIGEQQIIGQLRSAYQSANETGTVGRTLHDLTQRALRTGKRVHSETAIDSAGASMVSFALDQALRYIEPARALSAVVDDAPLSQPLAGHRALIIGAGAMASLASTHLGKLGIDHVTVANRTLSRAENLVNHARQAGVDASAVPLDGVTDCLSAVDIVVSATGAVGNVVTEQDVRAAVGAAGGVASVAGRRGTKVMIDLSMPADIEHSVAEIDGVKLLNIEELTTMAGDRVQDESPARAIVADELQSFLEQQRAQSVVPTVKALRQKAGEVMAEELMALERLTPDMSEADRAAVVKSMKRVVDKLLHTPTVQAKKLSAGGQQVSYPDALAALFNLPNGMVDSVTQPGQADSSAAQTAGTSARADQIPSAARVGRVVREA.

Substrate contacts are provided by residues 58–61 (TCNR), Ser118, 123–125 (EQQ), and Gln129. Residue Cys59 is the Nucleophile of the active site. Residue 214–219 (GAGAMA) coordinates NADP(+). The segment covering 461 to 477 (VTQPGQADSSAAQTAGT) has biased composition (polar residues). The interval 461–486 (VTQPGQADSSAAQTAGTSARADQIPS) is disordered.

The protein belongs to the glutamyl-tRNA reductase family. As to quaternary structure, homodimer.

The catalysed reaction is (S)-4-amino-5-oxopentanoate + tRNA(Glu) + NADP(+) = L-glutamyl-tRNA(Glu) + NADPH + H(+). It functions in the pathway porphyrin-containing compound metabolism; protoporphyrin-IX biosynthesis; 5-aminolevulinate from L-glutamyl-tRNA(Glu): step 1/2. Catalyzes the NADPH-dependent reduction of glutamyl-tRNA(Glu) to glutamate 1-semialdehyde (GSA). The sequence is that of Glutamyl-tRNA reductase from Corynebacterium jeikeium (strain K411).